The following is a 312-amino-acid chain: MMSVLVKEVIEKLRLDIVYGEPELLEKEINIADITRPGLEMTGYFDYYTPERIQLLGMKEWSYLISMPSNSRYEVLKKMFLPETPAVIVARGLVVPEEMLKAARECKIAILTSRAATSRLSGELSSYLDSRLAERTSVHGVLMDIYGMGVLIQGDSGIGKSETGLELVKRGHRLVADDRVDIFAKDEITLWGEPAEILKHLIEIRGVGIIDVMSLYGASAVKDSSQVQLAVYLENYDTHKTFDRLGNNAEELEVSGVAIPRIRIPVKTGRNISVVIEAAAMNYRAKEMGFDATRLFDERLTSLIARNEVQNA.

Residues His-139 and Lys-160 contribute to the active site. 154–161 serves as a coordination point for ATP; it reads GDSGIGKS. Ser-161 contributes to the Mg(2+) binding site. The active-site Proton acceptor; for phosphorylation activity. Proton donor; for dephosphorylation activity is the Asp-178. The important for the catalytic mechanism of both phosphorylation and dephosphorylation stretch occupies residues 202 to 211; it reads IEIRGVGIID. Glu-203 lines the Mg(2+) pocket. The active site involves Arg-244. The segment at 265-270 is important for the catalytic mechanism of dephosphorylation; it reads PVKTGR.

It belongs to the HPrK/P family. As to quaternary structure, homohexamer. Requires Mg(2+) as cofactor.

The enzyme catalyses [HPr protein]-L-serine + ATP = [HPr protein]-O-phospho-L-serine + ADP + H(+). It carries out the reaction [HPr protein]-O-phospho-L-serine + phosphate + H(+) = [HPr protein]-L-serine + diphosphate. Functionally, catalyzes the ATP- as well as the pyrophosphate-dependent phosphorylation of a specific serine residue in HPr, a phosphocarrier protein of the phosphoenolpyruvate-dependent sugar phosphotransferase system (PTS). HprK/P also catalyzes the pyrophosphate-producing, inorganic phosphate-dependent dephosphorylation (phosphorolysis) of seryl-phosphorylated HPr (P-Ser-HPr). The two antagonistic activities of HprK/P are regulated by several intracellular metabolites, which change their concentration in response to the absence or presence of rapidly metabolisable carbon sources (glucose, fructose, etc.) in the growth medium. Therefore, by controlling the phosphorylation state of HPr, HPrK/P is a sensor enzyme that plays a major role in the regulation of carbon metabolism and sugar transport: it mediates carbon catabolite repression (CCR), and regulates PTS-catalyzed carbohydrate uptake and inducer exclusion. The sequence is that of HPr kinase/phosphorylase from Streptococcus pneumoniae (strain ATCC BAA-255 / R6).